The following is a 280-amino-acid chain: UDP-3-O-acyl-N-acetylglucosamine deacetylase (280 aa).

Zn(2+) contacts are provided by His79, His237, and Asp241. The active-site Proton donor is His264.

This sequence belongs to the LpxC family. Zn(2+) serves as cofactor.

It catalyses the reaction a UDP-3-O-[(3R)-3-hydroxyacyl]-N-acetyl-alpha-D-glucosamine + H2O = a UDP-3-O-[(3R)-3-hydroxyacyl]-alpha-D-glucosamine + acetate. The protein operates within glycolipid biosynthesis; lipid IV(A) biosynthesis; lipid IV(A) from (3R)-3-hydroxytetradecanoyl-[acyl-carrier-protein] and UDP-N-acetyl-alpha-D-glucosamine: step 2/6. Catalyzes the hydrolysis of UDP-3-O-myristoyl-N-acetylglucosamine to form UDP-3-O-myristoylglucosamine and acetate, the committed step in lipid A biosynthesis. The chain is UDP-3-O-acyl-N-acetylglucosamine deacetylase from Chlamydia caviae (strain ATCC VR-813 / DSM 19441 / 03DC25 / GPIC) (Chlamydophila caviae).